Consider the following 542-residue polypeptide: Dihydropyrimidinase (542 aa).

Residues His-62, His-64, and Lys-167 each contribute to the Zn(2+) site. Lys-167 bears the N6-carboxylysine mark. Residue Tyr-172 coordinates substrate. Residues His-199 and His-255 each coordinate Zn(2+). Ser-331 contributes to the substrate binding site. Asp-358 contacts Zn(2+). Residue Asn-392 coordinates substrate.

The protein belongs to the metallo-dependent hydrolases superfamily. Hydantoinase/dihydropyrimidinase family. As to quaternary structure, homotetramer. The cofactor is Zn(2+). In terms of processing, carboxylation allows a single lysine to coordinate two zinc ions.

The enzyme catalyses 5,6-dihydrouracil + H2O = 3-(carbamoylamino)propanoate + H(+). Functionally, catalyzes the second step of the reductive pyrimidine degradation, the reversible hydrolytic ring opening of dihydropyrimidines. Can catalyze the ring opening of 5,6-dihydrouracil to N-carbamyl-alanine and of 5,6-dihydrothymine to N-carbamyl-amino isobutyrate. This chain is Dihydropyrimidinase (PYD2), found in Lachancea kluyveri (strain ATCC 58438 / CBS 3082 / BCRC 21498 / NBRC 1685 / JCM 7257 / NCYC 543 / NRRL Y-12651) (Yeast).